A 380-amino-acid chain; its full sequence is Cytochrome b (380 aa).

4 helical membrane passes run 33–53, 77–98, 113–133, and 178–198; these read FGSL…FLAM, WLLR…YLHI, WNIG…GYVL, and FFTF…LHLL. Residues His-83 and His-97 each contribute to the heme b site. 2 residues coordinate heme b: His-182 and His-196. His-201 is a binding site for a ubiquinone. A run of 4 helical transmembrane segments spans residues 226-246, 288-308, 320-340, and 347-367; these read YKDL…ALLN, LGGV…PVLH, PSQT…WIGG, and FIII…ILIP.

It belongs to the cytochrome b family. In terms of assembly, the cytochrome bc1 complex contains 3 respiratory subunits (MT-CYB, CYC1 and UQCRFS1), 2 core proteins (UQCRC1 and UQCRC2) and probably 6 low-molecular weight proteins. It depends on heme b as a cofactor.

It localises to the mitochondrion inner membrane. In terms of biological role, component of the ubiquinol-cytochrome c reductase complex (complex III or cytochrome b-c1 complex) that is part of the mitochondrial respiratory chain. The b-c1 complex mediates electron transfer from ubiquinol to cytochrome c. Contributes to the generation of a proton gradient across the mitochondrial membrane that is then used for ATP synthesis. The chain is Cytochrome b (mt-cyb) from Atractosteus spatula (Alligator gar).